Here is a 391-residue protein sequence, read N- to C-terminus: Phosphoprotein (391 aa).

3 positions are modified to phosphothreonine: threonine 10, threonine 16, and threonine 39. Serine 69 is subject to Phosphoserine. Disordered stretches follow at residues 82-101 (SSSE…FAQT) and 143-208 (PRTS…PANV). Residues threonine 91, threonine 150, and threonine 165 each carry the phosphothreonine modification. Serine 188 is modified (phosphoserine). Polar residues predominate over residues 198-208 (LPQQDSTPANV). A coiled-coil region spans residues 218 to 245 (ANEIMDLLRGMDARLQHLEQKVDKVLAQ). A Phosphothreonine modification is found at threonine 250. Serine 257 carries the phosphoserine modification. Phosphothreonine occurs at positions 258 and 282. Residues serine 292 and serine 294 each carry the phosphoserine modification. Threonine 298 is subject to Phosphothreonine. Phosphoserine is present on residues serine 301 and serine 374. Positions 343-391 (AGRKVMITKMITDCVANPQMKQAFEQRLAKASTEDALNDIKRDIIRSAI) are interaction with the nucleoprotein. Residues 348–391 (MITKMITDCVANPQMKQAFEQRLAKASTEDALNDIKRDIIRSAI) are x domain (XD). Threonine 375 carries the phosphothreonine modification.

It belongs to the rubulavirus/avulavirus P protein family. As to quaternary structure, homotetramer. Interacts (via multimerization domain) with polymerase L; this interaction forms the polymerase L-P complex. Interacts (via N-terminus) with N0 (via Ncore); this interaction allows P to chaperon N0 to avoid N polymerization before encapsidation. Interacts (via C-terminus) with N-RNA template; this interaction positions the polymerase on the template for both transcription and replication. Interacts with host RPS6KB1 kinase; this interaction may play a role in the viral replication and transcription.

It is found in the virion. Essential cofactor of the RNA polymerase L that plays a central role in the transcription and replication by forming the polymerase complex with RNA polymerase L and recruiting L to the genomic N-RNA template for RNA synthesis. Also plays a central role in the encapsidation of nascent RNA chains by forming the encapsidation complex with the nucleocapsid protein N (N-P complex). Acts as a chaperone for newly synthesized free N protein, so-called N0, allowing encapsidation of nascent RNA chains during replication. The nucleoprotein protein N prevents excessive phosphorylation of P, which leads to down-regulation of viral transcription/ replication. Participates, together with N, in the formation of viral factories (viroplasms), which are large inclusions in the host cytoplasm where replication takes place. The chain is Phosphoprotein (V/P) from Mumps orthorubulavirus (MuV).